A 69-amino-acid chain; its full sequence is Large ribosomal subunit protein bL28 (69 aa).

It belongs to the bacterial ribosomal protein bL28 family.

This Desulfovibrio desulfuricans (strain ATCC 27774 / DSM 6949 / MB) protein is Large ribosomal subunit protein bL28.